The chain runs to 43 residues: Protein PsbN 2 (43 aa).

Residues 4–24 (ATILGISIAAALVGITVLALY) form a helical membrane-spanning segment.

The protein belongs to the PsbN family.

The protein localises to the cellular thylakoid membrane. Its function is as follows. May play a role in photosystem I and II biogenesis. This Microcystis aeruginosa (strain NIES-843 / IAM M-2473) protein is Protein PsbN 2.